A 396-amino-acid chain; its full sequence is Probable splicing factor YJU2B (396 aa).

Residues 1–26 (MGERKGVNKYYPPDFNPEKHGSLNRY) are disordered. Ser-40 carries the phosphoserine modification. Positions 182–214 (LNSMLRRRFREKKKAIQEEEERDQALQAKASLT) form a coiled coil. The tract at residues 295–396 (IVRRRSRDVP…VADYSDSESE (102 aa)) is disordered. At Ser-306 the chain carries Phosphoserine. Residues 315–327 (KSGEPRVPEEAAQ) are compositionally biased toward basic and acidic residues. The segment covering 340–350 (TTETPKCSSPR) has biased composition (polar residues). Ser-362 bears the Phosphoserine mark.

It belongs to the CWC16 family.

It localises to the nucleus. Its function is as follows. May be involved in mRNA splicing. The polypeptide is Probable splicing factor YJU2B (Homo sapiens (Human)).